The following is a 167-amino-acid chain: Small ribosomal subunit protein uS9 (167 aa).

Disordered regions lie at residues 1 to 45 and 137 to 167; these read MSEY…GGAT and KAGF…FSKR. Residues 9-19 are compositionally biased toward acidic residues; that stretch reads DTVEDITESDE. Polar residues predominate over residues 20–36; sequence FTGTYTSESSTPATGGN. The span at 143 to 152 shows a compositional bias: basic and acidic residues; sequence RDPRATERKK. The segment covering 153–167 has biased composition (basic residues); it reads AGLKKARKAPQFSKR.

It belongs to the universal ribosomal protein uS9 family.

This chain is Small ribosomal subunit protein uS9, found in Kineococcus radiotolerans (strain ATCC BAA-149 / DSM 14245 / SRS30216).